Here is a 698-residue protein sequence, read N- to C-terminus: MEKYERIRVVGRGAFGIVHLCLRKADQKLVIIKQIPVEQMTKEERQAAQNECQVLKLLNHPNVIEYYENFLEDKALMIAMEYAPGGTLAEFIQKRCNSLLEEETILHFFVQILLALHHVHTHLILHRDLKTQNILLDKHRMVVKIGDFGISKILSSKSKAYTVVGTPCYISPELCEGKPYNQKSDIWALGCVLYELASLKRAFEAANLPALVLKIMSGTFAPISDRYSPELRQLVLSLLSLEPAQRPPLSHIMAQPLCIRALLNIHTDVGSVRMRRAEKCLTPGTPMAPGSTGSRATSARCRGVPRGPVRPAIPPPLSSVYAWGGGLSIPLRLPMPNTEVVQVAAGRTQKAGVTRSGRLILWEAPPLGTGGGTLLPGAVELPQPQFVSRFLEGQSGVTIKHVACGDLFTACLTDRGIIMTFGSGSNGCLGHGSLTDISQPTIVEALLGYEMVQVACGASHVLALSADGELFAWGRGDGGRLGLGTRESHNCPQQVPMVPGQEAQRVVCGIDCSMILTSPGRVLACGSNRFNKLGLDCLSLEEEPVPHQQVEEALSFTPLGSAPLDRETLLCVDLGTAHSAAVTASGACYTFGSNQHGQLGTSSRRVSRAPCRVQGLEGIKMVMVACGDAFTVAIGAEGEVYSWGKGARGRLGRRDEDAGLPRPVQLDETHPYTVTSVSCCHGNTLLAVRSVTDEPVPP.

A Protein kinase domain is found at 4–258 (YERIRVVGRG…LSHIMAQPLC (255 aa)). ATP contacts are provided by residues 10 to 18 (VGRGAFGIV) and lysine 33. Residue aspartate 128 is the Proton acceptor of the active site. Threonine 162 carries the post-translational modification Phosphothreonine; by autocatalysis. The disordered stretch occupies residues 281–307 (LTPGTPMAPGSTGSRATSARCRGVPRG). 5 RCC1 repeats span residues 415–466 (RGII…ALSA), 467–518 (DGEL…ILTS), 520–571 (GRVL…TLLC), 585–636 (SGAC…AIGA), and 638–689 (GEVY…LAVR).

The protein belongs to the protein kinase superfamily. NEK Ser/Thr protein kinase family. NIMA subfamily. In terms of assembly, interacts with PKD2; may regulate PKD2 targeting to the cilium. Interacts with ANKS6. Component of a complex containing at least ANKS6, INVS, NEK8 and NPHP3. ANKS6 may organize complex assembly by linking INVS and NPHP3 to NEK8 and INVS may target it to the proximal ciliary axoneme. Interacts with ANKS3. It depends on Mg(2+) as a cofactor.

Its subcellular location is the cytoplasm. The protein localises to the cytoskeleton. The protein resides in the cell projection. It is found in the cilium. It localises to the cilium axoneme. Its subcellular location is the microtubule organizing center. The protein localises to the centrosome. It carries out the reaction L-seryl-[protein] + ATP = O-phospho-L-seryl-[protein] + ADP + H(+). The catalysed reaction is L-threonyl-[protein] + ATP = O-phospho-L-threonyl-[protein] + ADP + H(+). Its function is as follows. Required for renal tubular integrity. May regulate local cytoskeletal structure in kidney tubule epithelial cells. May regulate ciliary biogenesis through targeting of proteins to the cilia. Plays a role in organogenesis and is involved in the regulation of the Hippo signaling pathway. The protein is Serine/threonine-protein kinase Nek8 (Nek8) of Rattus norvegicus (Rat).